Here is a 157-residue protein sequence, read N- to C-terminus: Ubiquitin-like protein 4A (157 aa).

The Ubiquitin-like domain maps to 1–76 (MQLTVKALQG…LNLVVKPLEK (76 aa)). Lys48 participates in a covalent cross-link: Glycyl lysine isopeptide (Lys-Gly) (interchain with G-Cter in ubiquitin). Residue Ser90 is modified to Phosphoserine. Positions 96–138 (WQLISKVLARHFSAADASRVLEQLQRDYERSLSRLTLDDIERL) are required and sufficient for interaction with BAG6.

As to quaternary structure, component of the BAG6/BAT3 complex, at least composed of BAG6, UBL4A and GET4/TRC35. Interacts with BAG6; the interaction is direct and required for UBL4A protein stability. Interacts with USP13; may be indirect via BAG6. Polyubiquitinated. Ubiquitination by AMFR and deubiquitination by USP13 may regulate the interaction between the BAG6/BAT complex and SGTA and therefore may regulate client proteins fate.

The protein localises to the cytoplasm. It localises to the cytosol. Its subcellular location is the nucleus. As part of a cytosolic protein quality control complex, the BAG6/BAT3 complex, maintains misfolded and hydrophobic patches-containing proteins in a soluble state and participates in their proper delivery to the endoplasmic reticulum or alternatively can promote their sorting to the proteasome where they undergo degradation. The BAG6/BAT3 complex is involved in the post-translational delivery of tail-anchored/type II transmembrane proteins to the endoplasmic reticulum membrane. Recruited to ribosomes, it interacts with the transmembrane region of newly synthesized tail-anchored proteins and together with SGTA and ASNA1 mediates their delivery to the endoplasmic reticulum. Client proteins that cannot be properly delivered to the endoplasmic reticulum are ubiquitinated and sorted to the proteasome. Similarly, the BAG6/BAT3 complex also functions as a sorting platform for proteins of the secretory pathway that are mislocalized to the cytosol either delivering them to the proteasome for degradation or to the endoplasmic reticulum. The BAG6/BAT3 complex also plays a role in the endoplasmic reticulum-associated degradation (ERAD), a quality control mechanism that eliminates unwanted proteins of the endoplasmic reticulum through their retrotranslocation to the cytosol and their targeting to the proteasome. It maintains these retrotranslocated proteins in an unfolded yet soluble state condition in the cytosol to ensure their proper delivery to the proteasome. The sequence is that of Ubiquitin-like protein 4A (UBL4A) from Callithrix jacchus (White-tufted-ear marmoset).